Consider the following 1017-residue polypeptide: Probable disease resistance protein RDL5 (1017 aa).

Positions 25–52 (QGVEDQVTELKRDLNMLSSFLKDANAKK) form a coiled coil. In terms of domain architecture, NB-ARC spans 147 to 460 (KQREMRQKFS…AEGIFQPRHY (314 aa)). 190-197 (GMGGLGKT) serves as a coordination point for ATP. 7 LRR repeats span residues 602–627 (LIHLRYLSLEYAEVTHIPYSLGNLKL), 649–674 (MQELRYLALPSDMGRKTKLELSNLVK), 675–699 (LETLENFSTENSSLEDLCGMVRLST), 768–791 (PSHLTTLYLESCRLEEDPMPILEK), 792–819 (LLQLKELELGFESFSGKKMVCSSGGFPQ), 841–865 (MPLLRTLDIQVCRKLKQLPDEHLPS), and 937–962 (MPFLHTLYIDDCPKLKKLPDGLQFIY).

Belongs to the disease resistance NB-LRR family.

Functionally, potential disease resistance protein. In Arabidopsis thaliana (Mouse-ear cress), this protein is Probable disease resistance protein RDL5 (RDL5).